Consider the following 286-residue polypeptide: Bifunctional protein FolD (286 aa).

NADP(+) is bound by residues 166–168 (GQS), S191, and I232.

It belongs to the tetrahydrofolate dehydrogenase/cyclohydrolase family. Homodimer.

It catalyses the reaction (6R)-5,10-methylene-5,6,7,8-tetrahydrofolate + NADP(+) = (6R)-5,10-methenyltetrahydrofolate + NADPH. The catalysed reaction is (6R)-5,10-methenyltetrahydrofolate + H2O = (6R)-10-formyltetrahydrofolate + H(+). The protein operates within one-carbon metabolism; tetrahydrofolate interconversion. Functionally, catalyzes the oxidation of 5,10-methylenetetrahydrofolate to 5,10-methenyltetrahydrofolate and then the hydrolysis of 5,10-methenyltetrahydrofolate to 10-formyltetrahydrofolate. The sequence is that of Bifunctional protein FolD from Alkalilimnicola ehrlichii (strain ATCC BAA-1101 / DSM 17681 / MLHE-1).